A 203-amino-acid chain; its full sequence is Small ribosomal subunit protein uS4 (203 aa).

The region spanning 93-156 is the S4 RNA-binding domain; that stretch reads RRLDNVVYRL…LKVPAILEAV (64 aa).

The protein belongs to the universal ribosomal protein uS4 family. As to quaternary structure, part of the 30S ribosomal subunit. Contacts protein S5. The interaction surface between S4 and S5 is involved in control of translational fidelity.

Functionally, one of the primary rRNA binding proteins, it binds directly to 16S rRNA where it nucleates assembly of the body of the 30S subunit. With S5 and S12 plays an important role in translational accuracy. The polypeptide is Small ribosomal subunit protein uS4 (Streptococcus pneumoniae serotype 2 (strain D39 / NCTC 7466)).